The sequence spans 259 residues: Isoepoxydon dehydrogenase patN (259 aa).

Residues N96 and R125 each coordinate NADP(+). Residues S143 and S144 each act as proton donor in the active site. Residues Y158, K162, and I191 each coordinate NADP(+). Catalysis depends on Y158, which acts as the Proton acceptor. The Lowers pKa of active site Tyr role is filled by K162.

It belongs to the short-chain dehydrogenases/reductases (SDR) family.

It localises to the cytoplasm. Its subcellular location is the cytosol. It catalyses the reaction isoepoxydon + NADP(+) = phyllostine + NADPH + H(+). The protein operates within mycotoxin biosynthesis; patulin biosynthesis. Isoepoxydon dehydrogenase; part of the gene cluster that mediates the biosynthesis of patulin, an acetate-derived tetraketide mycotoxin produced by several fungal species that shows antimicrobial properties against several bacteria. PatN catalyzes the conversion of isoepoxydon into phyllostine. The pathway begins with the synthesis of 6-methylsalicylic acid by the polyketide synthase (PKS) patK via condensation of acetate and malonate units. The 6-methylsalicylic acid decarboxylase patG then catalyzes the decarboxylation of 6-methylsalicylic acid to yield m-cresol (also known as 3-methylphenol). These first reactions occur in the cytosol. The intermediate m-cresol is then transported into the endoplasmic reticulum where the cytochrome P450 monooxygenase patH converts it to m-hydroxybenzyl alcohol, which is further converted to gentisyl alcohol by the cytochrome P450 monooxygenase patI. The oxidoreductases patJ and patO further convert gentisyl alcohol to isoepoxydon in the vacuole. PatN catalyzes then the transformation of isoepoxydon into phyllostine. The cluster protein patF is responsible for the conversion from phyllostine to neopatulin whereas the alcohol dehydrogenase patD converts neopatulin to E-ascladiol. The steps between isoepoxydon and E-ascladiol occur in the cytosol, and E-ascladiol is probably secreted to the extracellular space by one of the cluster-specific transporters patC or patM. Finally, the secreted patulin synthase patE catalyzes the conversion of E-ascladiol to patulin. In Aspergillus clavatus (strain ATCC 1007 / CBS 513.65 / DSM 816 / NCTC 3887 / NRRL 1 / QM 1276 / 107), this protein is Isoepoxydon dehydrogenase patN.